A 349-amino-acid chain; its full sequence is Heparin sulfate O-sulfotransferase (349 aa).

Residues Met1 to Trp17 lie on the Cytoplasmic side of the membrane. Residues Leu18 to Ile38 traverse the membrane as a helical; Signal-anchor for type II membrane protein segment. Topologically, residues Arg39–Lys349 are lumenal. N-linked (GlcNAc...) asparagine glycosylation is found at Asn107 and Asn126. Active-site residues include His139 and His141. Intrachain disulfides connect Cys200-Cys208 and Cys221-Cys227. Residue Asn282 is glycosylated (N-linked (GlcNAc...) asparagine).

It belongs to the sulfotransferase 3 family. As to quaternary structure, homotrimer.

The protein resides in the golgi apparatus membrane. Catalyzes the transfer of sulfate to the C2-position of selected hexuronic acid residues within the maturing heparan sulfate (HS). The polypeptide is Heparin sulfate O-sulfotransferase (Drosophila melanogaster (Fruit fly)).